Consider the following 659-residue polypeptide: Methionine--tRNA ligase (659 aa).

A 'HIGH' region motif is present at residues Y13–H23. A 'KMSKS' region motif is present at residues K308–S312. Residue K311 coordinates ATP. The 101-residue stretch at D559 to K659 folds into the tRNA-binding domain.

It belongs to the class-I aminoacyl-tRNA synthetase family. MetG type 2B subfamily. Homodimer.

Its subcellular location is the cytoplasm. The catalysed reaction is tRNA(Met) + L-methionine + ATP = L-methionyl-tRNA(Met) + AMP + diphosphate. Is required not only for elongation of protein synthesis but also for the initiation of all mRNA translation through initiator tRNA(fMet) aminoacylation. This is Methionine--tRNA ligase from Staphylococcus haemolyticus (strain JCSC1435).